We begin with the raw amino-acid sequence, 441 residues long: MTTVTRFAPSPTGYIHVGNLRTALMNWAIARKSGGTFILRLDDTDRERSKQEYSDGIMEDLEWLGLTWDRLERQSDRLDRYAEAADELRRAGRFYECFESPTELDLKRKKLLNMGKPPVYDRAALKLSDEERARLREERGGYWRFLLDQERIEWTDGILGPISIDAASVSDPVLIRADGQVLYTFASSVDDIDMGVTFIVRGGDHVTNTATQIQIMQALGGTPPSFAHHSLLTGAQGEALSKRLGTLSLRDLRARGVEPMALLSLMARLGSSQPVELFRTHEELLAGFDVGTFGAAPTKFDAEDLFPLTRHYVQGLPFEAVRGRIAALGVPDDLAEPFWRVAKDNIGVLEDLGGWWTLFSEGAEPQIDPEDEDFIRQAMTLLPPPPYGPESWAQFTAAVKEATGRKGKGLFMPLRKALTGQAHGPDMSEVMPLLQKVRAKG.

The short motif at 9 to 19 (PSPTGYIHVGN) is the 'HIGH' region element. Residues 239 to 243 (ALSKR) carry the 'KMSKS' region motif. Lys-242 contributes to the ATP binding site.

The protein belongs to the class-I aminoacyl-tRNA synthetase family. Glutamate--tRNA ligase type 1 subfamily. Monomer.

The protein localises to the cytoplasm. It carries out the reaction tRNA(Glu) + L-glutamate + ATP = L-glutamyl-tRNA(Glu) + AMP + diphosphate. In terms of biological role, catalyzes the attachment of glutamate to tRNA(Glu) in a two-step reaction: glutamate is first activated by ATP to form Glu-AMP and then transferred to the acceptor end of tRNA(Glu). The sequence is that of Glutamate--tRNA ligase 2 from Cereibacter sphaeroides (strain ATCC 17023 / DSM 158 / JCM 6121 / CCUG 31486 / LMG 2827 / NBRC 12203 / NCIMB 8253 / ATH 2.4.1.) (Rhodobacter sphaeroides).